We begin with the raw amino-acid sequence, 270 residues long: Monofunctional glycosyltransferase (270 aa).

The segment covering M1–S10 has biased composition (polar residues). Residues M1–K36 are disordered. A compositionally biased stretch (basic and acidic residues) spans P11–P21. The helical transmembrane segment at I42–Y62 threads the bilayer.

This sequence belongs to the glycosyltransferase 51 family.

It localises to the cell membrane. It catalyses the reaction [GlcNAc-(1-&gt;4)-Mur2Ac(oyl-L-Ala-gamma-D-Glu-L-Lys-D-Ala-D-Ala)](n)-di-trans,octa-cis-undecaprenyl diphosphate + beta-D-GlcNAc-(1-&gt;4)-Mur2Ac(oyl-L-Ala-gamma-D-Glu-L-Lys-D-Ala-D-Ala)-di-trans,octa-cis-undecaprenyl diphosphate = [GlcNAc-(1-&gt;4)-Mur2Ac(oyl-L-Ala-gamma-D-Glu-L-Lys-D-Ala-D-Ala)](n+1)-di-trans,octa-cis-undecaprenyl diphosphate + di-trans,octa-cis-undecaprenyl diphosphate + H(+). It functions in the pathway cell wall biogenesis; peptidoglycan biosynthesis. Peptidoglycan polymerase that catalyzes glycan chain elongation using lipid-linked disaccharide-pentapeptide as the substrate. This is Monofunctional glycosyltransferase from Staphylococcus haemolyticus (strain JCSC1435).